We begin with the raw amino-acid sequence, 593 residues long: Developmental and secondary metabolism regulator VEL1 (593 aa).

Positions 1–16 are enriched in polar residues; the sequence is MSNIVVSNETKSQSVR. Residues 1–21 form a disordered region; sequence MSNIVVSNETKSQSVRTTKDG. Positions 21–212 constitute a Velvet domain; the sequence is GRQIRYNLQV…AEQGCRVRIR (192 aa). The Nuclear localization signal motif lies at 35–40; sequence ERARAC. A disordered region spans residues 218–569; the sequence is RRRENKSSKE…PGSPDMEEPM (352 aa). The span at 310-326 shows a compositional bias: low complexity; sequence PSYGSNQPQYSQQYQTP. Over residues 327-340 the composition is skewed to pro residues; that stretch reads QPAPMMQPPQPPQH. 2 stretches are compositionally biased toward low complexity: residues 341 to 360 and 367 to 389; these read STPY…HQAQ and QQYG…QPQY. 2 stretches are compositionally biased toward polar residues: residues 413 to 429 and 440 to 449; these read SSIT…SSHP and GRSQQMSQPL. A PEST region spans residues 443-487; that stretch reads QQMSQPLHSSPQSYASSAPSHQSLPSLRPIVADKLEPVSPSYQSP. Over residues 450–465 the composition is skewed to low complexity; the sequence is HSSPQSYASSAPSHQS. 2 stretches are compositionally biased toward polar residues: residues 482–505 and 512–534; these read PSYQ…SNQH and NPQT…SSTF.

The protein belongs to the velvet family. VeA subfamily. As to quaternary structure, component of the heterotrimeric velvet complex composed of LAE1, VEL1 and VEL2; VEL1 acting as a bridging protein between LAE1 and VEL2.

The protein resides in the nucleus. The protein localises to the cytoplasm. In terms of biological role, component of the velvet transcription factor complex that controls sexual/asexual developmental ratio in response to light, promoting sexual development in the darkness while stimulating asexual sporulation under illumination. The velvet complex acts as a global regulator for secondary metabolite gene expression. Controls the expression of the T-toxin gene cluster. Promotes oxidative stress tolerance and acts as a virulence factors during infection. Negatively regulate mycelial pigmentation and controls sexual development, as well as asexual development during vegetative growth. The chain is Developmental and secondary metabolism regulator VEL1 from Cochliobolus heterostrophus (strain C5 / ATCC 48332 / race O) (Southern corn leaf blight fungus).